We begin with the raw amino-acid sequence, 232 residues long: Cell surface superoxide dismutase [Cu-Zn] 4 (232 aa).

The signal sequence occupies residues 1-15 (MKYLSIISIVALALA). Asn53 carries N-linked (GlcNAc...) asparagine glycosylation. His75 and His77 together coordinate Cu cation. Residue Asn86 is glycosylated (N-linked (GlcNAc...) asparagine). His93 is a Cu cation binding site. His93 is a Zn(2+) binding site. Asn98 carries an N-linked (GlcNAc...) asparagine glycan. Asp113 provides a ligand contact to Zn(2+). Asn120 carries N-linked (GlcNAc...) asparagine glycosylation. Residue His153 coordinates Cu cation. Residues Asn156, Asn164, Asn182, Asn193, and Asn196 are each glycosylated (N-linked (GlcNAc...) asparagine). Residues 174–208 (TASAATWSNSSSSSSSSSKNSTNGSSGSSTSASQG) show a composition bias toward low complexity. A disordered region spans residues 174–211 (TASAATWSNSSSSSSSSSKNSTNGSSGSSTSASQGSGA). The GPI-anchor amidated serine moiety is linked to residue Ser209. The propeptide at 210 to 232 (GAGRAEISGFLAAGIAGVVAALI) is removed in mature form. Arg213 provides a ligand contact to substrate.

The protein belongs to the Cu-Zn superoxide dismutase family. The cofactor is Cu cation. Zn(2+) serves as cofactor. Post-translationally, the GPI-anchor is attached to the protein in the endoplasmic reticulum and serves to target the protein to the cell surface. There, the glucosamine-inositol phospholipid moiety is cleaved off and the GPI-modified mannoprotein is covalently attached via its lipidless GPI glycan remnant to the 1,6-beta-glucan of the outer cell wall layer.

It is found in the secreted. The protein localises to the cell wall. Its subcellular location is the membrane. It catalyses the reaction 2 superoxide + 2 H(+) = H2O2 + O2. Functionally, superoxide dismutases serve to convert damaging superoxide radicals, a key form of ROS, to less damaging hydrogen peroxide that can be converted into water by catalase action. Degrades host-derived reactive oxygen species to escape innate immune surveillance. Involved in the occurrence of miconazole-tolerant persisters in biofilms. Persisters are cells that survive high doses of an antimicrobial agent. This chain is Cell surface superoxide dismutase [Cu-Zn] 4 (SOD4), found in Candida albicans (strain SC5314 / ATCC MYA-2876) (Yeast).